The chain runs to 59 residues: Temporin-CDYd (59 aa).

Positions 1-22 (MFTLKKSMLLLLFLGTISLTLC) are cleaved as a signal peptide. Positions 23-42 (EEERDANEEEENGGEVKEEE) are excised as a propeptide.

Belongs to the frog skin active peptide (FSAP) family. Temporin subfamily. In terms of tissue distribution, expressed by the skin glands.

It is found in the secreted. In terms of biological role, antimicrobial peptide. The sequence is that of Temporin-CDYd from Rana dybowskii (Dybovsky's frog).